The following is a 125-amino-acid chain: Snaclec coagulation factor IX/factor X-binding protein subunit B (125 aa).

Residues 1–122 (DCSSGWTAYG…SLFGHFVCKS (122 aa)) form the C-type lectin domain. Disulfide bonds link Cys-2–Cys-13, Cys-30–Cys-120, and Cys-97–Cys-112. Ca(2+)-binding residues include Ser-41 and Glu-47.

Belongs to the snaclec family. As to quaternary structure, heterodimer of subunits A and B; disulfide-linked. As to expression, expressed by the venom gland.

It is found in the secreted. Functionally, anticoagulant protein which binds to coagulation factor IX (F9) and coagulation factor X (F10) in the presence of calcium. It may bind the gamma-carboxyglutamic acid-domain regions of factors with a 1 to 1 stoichiometry. The dissociation constant (K(d)) are 6.6 nM for factor IX (F9) and 125 nM for factor X (F10). Does not bind carbohydrates. In Echis carinatus (Saw-scaled viper), this protein is Snaclec coagulation factor IX/factor X-binding protein subunit B.